Here is a 556-residue protein sequence, read N- to C-terminus: TNF receptor-associated factor 6-A (556 aa).

The segment at 72–111 (CPICLMALREAVQTPCGHRFCKACILKSLRNAGHKCPVDN) adopts an RING-type; degenerate zinc-finger fold. 2 consecutive TRAF-type zinc fingers follow at residues 148–204 (RHLE…EDKS) and 205–261 (GHEL…HNLA). The 150-residue stretch at 384 to 533 (NGVFIWRIKG…NDTLLVRCSV (150 aa)) folds into the MATH domain.

This sequence belongs to the TNF receptor-associated factor family. A subfamily. Homotrimer. Homooligomer. Interacts with tifa. As to expression, highly expressed in ovary and moderately expressed in kidney, spleen, stomach, colon and testis.

It localises to the cytoplasm. The protein resides in the cell cortex. It is found in the nucleus. The protein localises to the lipid droplet. It carries out the reaction S-ubiquitinyl-[E2 ubiquitin-conjugating enzyme]-L-cysteine + [acceptor protein]-L-lysine = [E2 ubiquitin-conjugating enzyme]-L-cysteine + N(6)-ubiquitinyl-[acceptor protein]-L-lysine.. It participates in protein modification; protein ubiquitination. Its function is as follows. E3 ubiquitin ligase that, together with UBE2N and UBE2V1, mediates the synthesis of 'Lys-63'-linked-polyubiquitin chains conjugated to proteins, such as IKBKG, IRAK1, AKT1 and AKT2. Also mediates ubiquitination of free/unanchored polyubiquitin chain that leads to MAP3K7 activation. In Xenopus laevis (African clawed frog), this protein is TNF receptor-associated factor 6-A (traf6-a).